The following is a 248-amino-acid chain: Acetoacetyl-CoA reductase (248 aa).

Residues 14–16 (GGI), arginine 42, and 90–94 (NAGIT) contribute to the NADP(+) site. Residues aspartate 96 and 149–152 (QFGQ) each bind substrate. Tyrosine 155 acts as the Proton acceptor in catalysis. 185–188 (PGYT) provides a ligand contact to NADP(+). Substrate contacts are provided by residues 186 to 187 (GY) and arginine 197.

The protein belongs to the short-chain dehydrogenases/reductases (SDR) family.

It is found in the cytoplasm. The enzyme catalyses a (3R)-3-hydroxyacyl-CoA + NADP(+) = a 3-oxoacyl-CoA + NADPH + H(+). Its pathway is biopolymer metabolism; poly-(R)-3-hydroxybutanoate biosynthesis. The sequence is that of Acetoacetyl-CoA reductase (phaB) from Acinetobacter sp. (strain RA3849).